The primary structure comprises 191 residues: MTQQITLIKDKILSDNYFTLHNITYDLTRKDGEVIRHKREVYDRGNGATILLYNTKKKTVVLIRQFRVATWVNGNESGQLIESCAGLLDNDEPEVCIRKEAIEETGYEVGEVRKLFELYMSPGGVTELIHFFIAEYSDNQRANAGGGVEDEDIEVLELPFSQALEMIKTGEIRDGKTVLLLNYLQTSHLMD.

GDP-alpha-D-mannose-binding positions include tyrosine 17, lysine 38–glutamate 40, arginine 67, and alanine 85–leucine 87. The Nudix hydrolase domain maps to aspartate 43–leucine 180. The Mg(2+) site is built by alanine 85, glutamate 100, and glutamate 104. A Nudix box motif is present at residues glycine 86–glycine 106. GDP-alpha-D-mannose-binding positions include glutamate 104, glutamate 127, aspartate 150–glutamate 151, and lysine 176. Glutamate 151 serves as a coordination point for Mg(2+).

This sequence belongs to the Nudix hydrolase family. NudK subfamily. Homodimer. It depends on Mg(2+) as a cofactor.

It catalyses the reaction GDP-alpha-D-mannose + H2O = alpha-D-mannose 1-phosphate + GMP + 2 H(+). In terms of biological role, nucleoside diphosphate sugar hydrolase that hydrolyzes GDP-mannose as its preferred substrate, yielding GMP and mannose-1-phosphate. The protein is GDP-mannose pyrophosphatase (nudK) of Escherichia coli (strain K12 / DH10B).